A 471-amino-acid polypeptide reads, in one-letter code: Replication factor C large subunit (471 aa).

Position 44–51 (44–51 (GSPGIGKT)) interacts with ATP. Positions 422-431 (RTDAAVDHSE) are enriched in basic and acidic residues. Residues 422-471 (RTDAAVDHSEGAFAGAVREDNTDEDSAADETTDGDEDTGADSQRGLDEFF) form a disordered region. Residues 442–460 (NTDEDSAADETTDGDEDTG) are compositionally biased toward acidic residues.

The protein belongs to the activator 1 small subunits family. RfcL subfamily. In terms of assembly, heteromultimer composed of small subunits (RfcS) and large subunits (RfcL).

Its function is as follows. Part of the RFC clamp loader complex which loads the PCNA sliding clamp onto DNA. This is Replication factor C large subunit from Halobacterium salinarum (strain ATCC 29341 / DSM 671 / R1).